A 548-amino-acid polypeptide reads, in one-letter code: Eukaryotic translation initiation factor 3 subunit D (548 aa).

Lysine 53 is subject to N6-acetyllysine. A Phosphoserine modification is found at serine 161. The segment at 285–299 is RNA gate; the sequence is DFDLLTVSETANEPP. The interval 523 to 548 is disordered; it reads PDGTFSSDEDEEEEEEEEEEEEEEET. Serine 528 and serine 529 each carry phosphoserine. The span at 529-548 shows a compositional bias: acidic residues; sequence SDEDEEEEEEEEEEEEEEET.

The protein belongs to the eIF-3 subunit D family. Component of the eukaryotic translation initiation factor 3 (eIF-3) complex, which is composed of 13 subunits: EIF3A, EIF3B, EIF3C, EIF3D, EIF3E, EIF3F, EIF3G, EIF3H, EIF3I, EIF3J, EIF3K, EIF3L and EIF3M. The eIF-3 complex appears to include 3 stable modules: module A is composed of EIF3A, EIF3B, EIF3G and EIF3I; module B is composed of EIF3F, EIF3H, and EIF3M; and module C is composed of EIF3C, EIF3D, EIF3E, EIF3K and EIF3L. EIF3C of module C binds EIF3B of module A and EIF3H of module B, thereby linking the three modules. EIF3J is a labile subunit that binds to the eIF-3 complex via EIF3B. The eIF-3 complex interacts with RPS6KB1 under conditions of nutrient depletion. Mitogenic stimulation leads to binding and activation of a complex composed of MTOR and RPTOR, leading to phosphorylation and release of RPS6KB1 and binding of EIF4B to eIF-3. In terms of assembly, (Microbial infection) Interacts with Norwalk virus VPg protein.

The protein localises to the cytoplasm. Its function is as follows. mRNA cap-binding component of the eukaryotic translation initiation factor 3 (eIF-3) complex, a complex required for several steps in the initiation of protein synthesis of a specialized repertoire of mRNAs. The eIF-3 complex associates with the 40S ribosome and facilitates the recruitment of eIF-1, eIF-1A, eIF-2:GTP:methionyl-tRNAi and eIF-5 to form the 43S pre-initiation complex (43S PIC). The eIF-3 complex stimulates mRNA recruitment to the 43S PIC and scanning of the mRNA for AUG recognition. The eIF-3 complex is also required for disassembly and recycling of post-termination ribosomal complexes and subsequently prevents premature joining of the 40S and 60S ribosomal subunits prior to initiation. The eIF-3 complex specifically targets and initiates translation of a subset of mRNAs involved in cell proliferation, including cell cycling, differentiation and apoptosis, and uses different modes of RNA stem-loop binding to exert either translational activation or repression. In the eIF-3 complex, EIF3D specifically recognizes and binds the 7-methylguanosine cap of a subset of mRNAs. Functionally, (Microbial infection) In case of FCV infection, plays a role in the ribosomal termination-reinitiation event leading to the translation of VP2. This chain is Eukaryotic translation initiation factor 3 subunit D, found in Homo sapiens (Human).